Consider the following 355-residue polypeptide: Histidinol-phosphate aminotransferase (355 aa).

Lys-222 carries the N6-(pyridoxal phosphate)lysine modification.

This sequence belongs to the class-II pyridoxal-phosphate-dependent aminotransferase family. Histidinol-phosphate aminotransferase subfamily. Requires pyridoxal 5'-phosphate as cofactor.

The enzyme catalyses L-histidinol phosphate + 2-oxoglutarate = 3-(imidazol-4-yl)-2-oxopropyl phosphate + L-glutamate. It participates in amino-acid biosynthesis; L-histidine biosynthesis; L-histidine from 5-phospho-alpha-D-ribose 1-diphosphate: step 7/9. The polypeptide is Histidinol-phosphate aminotransferase (Natronomonas pharaonis (strain ATCC 35678 / DSM 2160 / CIP 103997 / JCM 8858 / NBRC 14720 / NCIMB 2260 / Gabara) (Halobacterium pharaonis)).